The sequence spans 473 residues: Transposase for insertion sequence element IS1151 (473 aa).

It belongs to the transposase 11 family.

Functionally, involved in the transposition of the insertion sequence. The protein is Transposase for insertion sequence element IS1151 (tnp) of Clostridium perfringens.